We begin with the raw amino-acid sequence, 2045 residues long: Non-reducing polyketide synthase pks27 (2045 aa).

The N-terminal acylcarrier protein transacylase domain (SAT) stretch occupies residues isoleucine 10–histidine 247. A Ketosynthase family 3 (KS3) domain is found at histidine 380 to aspartate 813. Catalysis depends on for beta-ketoacyl synthase activity residues cysteine 552, histidine 687, and histidine 731. Positions phenylalanine 913–threonine 1213 are malonyl-CoA:ACP transacylase (MAT) domain. Residues histidine 1289 to alanine 1422 form an N-terminal hotdog fold region. The PKS/mFAS DH domain occupies histidine 1289–aspartate 1599. Histidine 1321 acts as the Proton acceptor; for dehydratase activity in catalysis. The tract at residues alanine 1442–aspartate 1599 is C-terminal hotdog fold. Aspartate 1511 functions as the Proton donor; for dehydratase activity in the catalytic mechanism. A disordered region spans residues alanine 1612–alanine 1636. Residues asparagine 1619–alanine 1636 are compositionally biased toward low complexity. The Carrier domain maps to glutamine 1635–alanine 1712. The tract at residues asparagine 1640–lysine 1709 is product template (PT) domain. At serine 1672 the chain carries O-(pantetheine 4'-phosphoryl)serine. Positions glutamate 1735–serine 1776 are disordered. Basic and acidic residues predominate over residues aspartate 1739 to serine 1750. Over residues isoleucine 1760–serine 1776 the composition is skewed to low complexity. Residues threonine 1798–glycine 2039 are thioesterase.

Requires pantetheine 4'-phosphate as cofactor.

The protein operates within secondary metabolite biosynthesis. Functionally, non-reducing polyketide synthase (NRPKS); part of the gene cluster 27 that mediates the biosynthesis of asparasone A, a sclerotium-specific anthraquinone pigment important for sclerotial survival. Catalyzes the formation of the aromatic polyketide from acetyl coenzyme A and seven malonyl coenzyme A molecules. Through its product template (PT) domain, catalyzes the cyclization of polyketide backbone via C6-C11 aldolcondensation. In Aspergillus flavus (strain ATCC 200026 / FGSC A1120 / IAM 13836 / NRRL 3357 / JCM 12722 / SRRC 167), this protein is Non-reducing polyketide synthase pks27.